We begin with the raw amino-acid sequence, 249 residues long: 5'-nucleotidase SurE (249 aa).

Residues Asp8, Asp9, Ser39, and Asn91 each contribute to the a divalent metal cation site.

This sequence belongs to the SurE nucleotidase family. It depends on a divalent metal cation as a cofactor.

The protein localises to the cytoplasm. It carries out the reaction a ribonucleoside 5'-phosphate + H2O = a ribonucleoside + phosphate. In terms of biological role, nucleotidase that shows phosphatase activity on nucleoside 5'-monophosphates. The protein is 5'-nucleotidase SurE of Pseudomonas savastanoi pv. phaseolicola (strain 1448A / Race 6) (Pseudomonas syringae pv. phaseolicola (strain 1448A / Race 6)).